The sequence spans 447 residues: Rab GDP dissociation inhibitor alpha (447 aa).

Ser427 is subject to Phosphoserine.

Belongs to the Rab GDI family. As to quaternary structure, interacts with RHOH. Interacts with the non-phosphorylated forms of RAB1A, RAB3A, RAB5A, RAB5B, RAB5C, RAB8A, RAB8B, RAB10, RAB12, RAB35, and RAB43.

It is found in the cytoplasm. It localises to the golgi apparatus. The protein localises to the trans-Golgi network. In terms of biological role, regulates the GDP/GTP exchange reaction of most Rab proteins by inhibiting the dissociation of GDP from them, and the subsequent binding of GTP to them. Promotes the dissociation of GDP-bound Rab proteins from the membrane and inhibits their activation. Promotes the dissociation of RAB1A, RAB3A, RAB5A and RAB10 from membranes. This chain is Rab GDP dissociation inhibitor alpha (GDI1), found in Canis lupus familiaris (Dog).